A 467-amino-acid polypeptide reads, in one-letter code: MWGCPLGLLLLLLAGQAALEARRSRWRRELAPGLHLRGIRDAGGRYCQEQDMCCRGRADECALPYLGATCYCDLFCNRTVSDCCPDFWDFCLGIPPPFPPVQGCMHAGRIYPIFGTYWENCNRCTCHEKGQWECDQEPCLVDPAMIKAINRGNYGWQAGNHSAFWGMTLDEGIRYRLGTIRPSSSVMNMNEIYTVLGQGEVLPTAFEASEKWPNLIHEPLDQGNCAGSWAFSTAAVASDRVSIHSLGHMTPILSPQNLLSCDTHHQKGCRGGRLDGAWWFLRRRGVVSDNCYPFSGREQNDEASPTPRCMMHSRAMGRGKRQATSRCPNSQVDSNDIYQVTPVYRLASDEKEIMKELMENGPVQALMEVHEDFFLYQRGIYSHTPVSQGRPEQYRRHGTHSVKITGWGEETLPDGRTIKYWTAANSWGPWWGERGHFRIVRGINECDIETFVLGVWGRVGMEDMGHH.

An N-terminal signal peptide occupies residues 1–21; the sequence is MWGCPLGLLLLLLAGQAALEA. In terms of domain architecture, SMB spans 49-96; it reads EQDMCCRGRADECALPYLGATCYCDLFCNRTVSDCCPDFWDFCLGIPP. 5 cysteine pairs are disulfide-bonded: cysteine 53–cysteine 72, cysteine 70–cysteine 72, cysteine 70–cysteine 84, cysteine 76–cysteine 83, and cysteine 84–cysteine 91. An N-linked (GlcNAc...) asparagine glycan is attached at asparagine 77. Asparagine 160 is a glycosylation site (N-linked (GlcNAc...) asparagine).

Belongs to the peptidase C1 family. Glycosylated.

The protein resides in the secreted. May be implicated in the adrenocortical zonation and in mechanisms for repressing the CYP11B1 gene expression in adrenocortical cells. This is a non catalytic peptidase C1 family protein. This chain is Tubulointerstitial nephritis antigen-like (Tinagl1), found in Rattus norvegicus (Rat).